Consider the following 81-residue polypeptide: Acyl carrier protein (81 aa).

Residues 2-80 (ASKEEILAGL…DAVDFIDGAQ (79 aa)) enclose the Carrier domain. Ser40 is modified (O-(pantetheine 4'-phosphoryl)serine).

Belongs to the acyl carrier protein (ACP) family. 4'-phosphopantetheine is transferred from CoA to a specific serine of apo-ACP by AcpS. This modification is essential for activity because fatty acids are bound in thioester linkage to the sulfhydryl of the prosthetic group.

The protein resides in the cytoplasm. Its pathway is lipid metabolism; fatty acid biosynthesis. Functionally, carrier of the growing fatty acid chain in fatty acid biosynthesis. The polypeptide is Acyl carrier protein (Micrococcus luteus (strain ATCC 4698 / DSM 20030 / JCM 1464 / CCM 169 / CCUG 5858 / IAM 1056 / NBRC 3333 / NCIMB 9278 / NCTC 2665 / VKM Ac-2230) (Micrococcus lysodeikticus)).